Here is a 293-residue protein sequence, read N- to C-terminus: Nucleotide-binding protein HRM2_27900 (293 aa).

11 to 18 (GLSGSGKS) provides a ligand contact to ATP. Residue 62–65 (DIRA) participates in GTP binding.

Belongs to the RapZ-like family.

Its function is as follows. Displays ATPase and GTPase activities. The protein is Nucleotide-binding protein HRM2_27900 of Desulforapulum autotrophicum (strain ATCC 43914 / DSM 3382 / VKM B-1955 / HRM2) (Desulfobacterium autotrophicum).